The chain runs to 398 residues: Elongation factor Tu (398 aa).

One can recognise a tr-type G domain in the interval 10-207 (KPHVNIGTIG…TVDSYIPEPE (198 aa)). A G1 region spans residues 19–26 (GHVDHGKT). 19 to 26 (GHVDHGKT) is a binding site for GTP. Position 26 (threonine 26) interacts with Mg(2+). Residues 63-67 (GITIN) form a G2 region. The interval 84–87 (DAPG) is G3. GTP is bound by residues 84–88 (DAPGH) and 139–142 (NKVD). A G4 region spans residues 139 to 142 (NKVD). The tract at residues 177–179 (SAL) is G5.

This sequence belongs to the TRAFAC class translation factor GTPase superfamily. Classic translation factor GTPase family. EF-Tu/EF-1A subfamily. In terms of assembly, monomer.

It is found in the cytoplasm. It catalyses the reaction GTP + H2O = GDP + phosphate + H(+). GTP hydrolase that promotes the GTP-dependent binding of aminoacyl-tRNA to the A-site of ribosomes during protein biosynthesis. In Streptococcus pyogenes serotype M1, this protein is Elongation factor Tu.